A 148-amino-acid chain; its full sequence is Prefoldin subunit 2 (148 aa).

Residues 87–114 (KDGLEEVVRKLYETLEKKKKDLTEFEAK) adopt a coiled-coil conformation. The segment covering 122–134 (QEDNKEGGNKKEG) has biased composition (basic and acidic residues). Residues 122-148 (QEDNKEGGNKKEGNAQGVLVGAASSSQ) form a disordered region.

It belongs to the prefoldin subunit beta family. In terms of assembly, heterohexamer of two PFD-alpha type and four PFD-beta type subunits forming prefoldin co-chaperone complex. Interacts with LSM8, a specific subunit of the LSM2-8 complex, which is a core component of the spliceosome.

It is found in the cytoplasm. The protein localises to the nucleus. In terms of biological role, binds specifically to cytosolic chaperonin (c-CPN) and transfers target proteins to it. Binds to nascent polypeptide chain and promotes folding in an environment in which there are many competing pathways for nonnative proteins. Together with other chaperonins, contribute to the regulation of gene expression by modulating the spliceosome function on pre-mRNA splicing post-transcriptionally by acting as a co-chaperone of Hsp90 to control levels of LSM8. Required for microtubules (MTs) organization and dynamicity. Involved in the process leading to microtubules dissociation in response to gibberellic acid (GA) probably due to the DELLA proteins-mediated translocation of the prefoldin co-chaperone complex from the cytoplasm to the nucleus. This Arabidopsis thaliana (Mouse-ear cress) protein is Prefoldin subunit 2.